Reading from the N-terminus, the 378-residue chain is Carbamoyl phosphate synthase small chain (378 aa).

The CPSase stretch occupies residues 1 to 188 (MSILKEAYLY…THFAYGTSPN (188 aa)). 3 residues coordinate L-glutamine: Ser-49, Gly-244, and Gly-246. The Glutamine amidotransferase type-1 domain maps to 192–378 (KVVAIDFGAK…FEEFAKLCCK (187 aa)). The Nucleophile role is filled by Cys-272. 4 residues coordinate L-glutamine: Leu-273, Gln-276, Asn-314, and Tyr-317. Catalysis depends on residues His-355 and Glu-357.

This sequence belongs to the CarA family. In terms of assembly, composed of two chains; the small (or glutamine) chain promotes the hydrolysis of glutamine to ammonia, which is used by the large (or ammonia) chain to synthesize carbamoyl phosphate. Tetramer of heterodimers (alpha,beta)4.

It catalyses the reaction hydrogencarbonate + L-glutamine + 2 ATP + H2O = carbamoyl phosphate + L-glutamate + 2 ADP + phosphate + 2 H(+). The enzyme catalyses L-glutamine + H2O = L-glutamate + NH4(+). It functions in the pathway amino-acid biosynthesis; L-arginine biosynthesis; carbamoyl phosphate from bicarbonate: step 1/1. The protein operates within pyrimidine metabolism; UMP biosynthesis via de novo pathway; (S)-dihydroorotate from bicarbonate: step 1/3. In terms of biological role, small subunit of the glutamine-dependent carbamoyl phosphate synthetase (CPSase). CPSase catalyzes the formation of carbamoyl phosphate from the ammonia moiety of glutamine, carbonate, and phosphate donated by ATP, constituting the first step of 2 biosynthetic pathways, one leading to arginine and/or urea and the other to pyrimidine nucleotides. The small subunit (glutamine amidotransferase) binds and cleaves glutamine to supply the large subunit with the substrate ammonia. In Helicobacter hepaticus (strain ATCC 51449 / 3B1), this protein is Carbamoyl phosphate synthase small chain.